The sequence spans 1040 residues: Probable starch synthase 4, chloroplastic/amyloplastic (1040 aa).

A chloroplast-targeting transit peptide spans 1-42 (MTTKLSSFCFLTHGLAGISCEREHGSSRRFFYLPSRRLVSTS). A disordered region spans residues 43 to 142 (CKMRQQRGFD…KSKTAKKKGE (100 aa)). Basic and acidic residues-rich tracts occupy residues 52-61 (DSSKRQEVKK) and 112-124 (NHADENLEKKDDI). A coiled-coil region spans residues 187 to 466 (ELMTMIRSAE…EESKKKSRDE (280 aa)). ADP-binding residues include Lys-556, Gly-559, and Asp-562. Positions 679 and 680 each coordinate (1,4-alpha-D-glucosyl)n. ADP is bound by residues Arg-849, Lys-854, Lys-906, Asp-908, Tyr-916, Leu-933, and Thr-934.

The protein belongs to the glycosyltransferase 1 family. Bacterial/plant glycogen synthase subfamily. In terms of assembly, interacts with PTST2. Interacts with PII1; the interaction is essential for the initiation of starch granules biosynthesis in leaf chloroplasts. In terms of tissue distribution, expressed in leaves and flowers.

It is found in the plastid. The protein localises to the chloroplast. It localises to the amyloplast. The protein resides in the chloroplast stroma. It carries out the reaction [(1-&gt;4)-alpha-D-glucosyl](n) + ADP-alpha-D-glucose = [(1-&gt;4)-alpha-D-glucosyl](n+1) + ADP + H(+). Its pathway is glycan biosynthesis; starch biosynthesis. Functionally, probably involved in the priming of starch granule formation. May play a regulatory role in the control of starch accumulation in plastids. Is necessary and sufficient to establish the correct number of starch granules observed in chloroplasts. The sequence is that of Probable starch synthase 4, chloroplastic/amyloplastic from Arabidopsis thaliana (Mouse-ear cress).